A 446-amino-acid polypeptide reads, in one-letter code: NADH-ubiquinone oxidoreductase chain 4 (446 aa).

13 helical membrane-spanning segments follow: residues Ile4 to Val24, Met56 to Ser76, Ile93 to Tyr113, Leu114 to Pro134, Ala139 to Phe159, Leu182 to Leu202, Ile218 to Leu238, Tyr245 to Leu265, Ala272 to Met292, Leu297 to Leu317, Met330 to Leu350, Ile373 to Ala393, and Leu426 to Leu446.

Belongs to the complex I subunit 4 family.

It localises to the mitochondrion membrane. It carries out the reaction a ubiquinone + NADH + 5 H(+)(in) = a ubiquinol + NAD(+) + 4 H(+)(out). Core subunit of the mitochondrial membrane respiratory chain NADH dehydrogenase (Complex I) that is believed to belong to the minimal assembly required for catalysis. Complex I functions in the transfer of electrons from NADH to the respiratory chain. The immediate electron acceptor for the enzyme is believed to be ubiquinone. The protein is NADH-ubiquinone oxidoreductase chain 4 (mt:ND4) of Drosophila melanogaster (Fruit fly).